A 91-amino-acid polypeptide reads, in one-letter code: Non-specific lipid-transfer protein 1 (91 aa).

4 cysteine pairs are disulfide-bonded: Cys4–Cys51, Cys14–Cys28, Cys29–Cys74, and Cys49–Cys88.

In terms of tissue distribution, detected in seeds (at protein level).

Plant non-specific lipid-transfer proteins transfer phospholipids as well as galactolipids across membranes. May play a role in wax or cutin deposition in the cell walls of expanding epidermal cells and certain secretory tissues. The sequence is that of Non-specific lipid-transfer protein 1 from Trachyspermum ammi (Ajowan caraway).